Here is a 598-residue protein sequence, read N- to C-terminus: Probable translation initiation factor IF-2 (598 aa).

The 221-residue stretch at 3 to 223 (LRCPIVSVLG…ISGLAQRFME (221 aa)) folds into the tr-type G domain. Residues 12 to 19 (GHVDHGKT) form a G1 region. 12 to 19 (GHVDHGKT) provides a ligand contact to GTP. Positions 37–41 (GITQH) are G2. Positions 76-79 (DTPG) are G3. GTP contacts are provided by residues 76–80 (DTPGH) and 130–133 (NKID). Residues 130–133 (NKID) are G4. The segment at 200-202 (SAM) is G5.

Belongs to the TRAFAC class translation factor GTPase superfamily. Classic translation factor GTPase family. IF-2 subfamily.

Functionally, function in general translation initiation by promoting the binding of the formylmethionine-tRNA to ribosomes. Seems to function along with eIF-2. The sequence is that of Probable translation initiation factor IF-2 from Methanococcus aeolicus (strain ATCC BAA-1280 / DSM 17508 / OCM 812 / Nankai-3).